The sequence spans 156 residues: UPF0251 protein Sfum_2819 (156 aa).

The protein belongs to the UPF0251 family.

The sequence is that of UPF0251 protein Sfum_2819 from Syntrophobacter fumaroxidans (strain DSM 10017 / MPOB).